Consider the following 345-residue polypeptide: Probable deoxyhypusine synthase 2 (345 aa).

Residue K292 is the Nucleophile of the active site.

Belongs to the deoxyhypusine synthase family. The cofactor is NAD(+).

It catalyses the reaction [eIF5A protein]-L-lysine + spermidine = [eIF5A protein]-deoxyhypusine + propane-1,3-diamine. It participates in protein modification; eIF5A hypusination. Functionally, catalyzes the NAD-dependent oxidative cleavage of spermidine and the subsequent transfer of the butylamine moiety of spermidine to the epsilon-amino group of a specific lysine residue of the eIF-5A precursor protein to form the intermediate deoxyhypusine residue. This is Probable deoxyhypusine synthase 2 (dys2) from Methanosarcina acetivorans (strain ATCC 35395 / DSM 2834 / JCM 12185 / C2A).